A 262-amino-acid chain; its full sequence is Thiazole synthase (262 aa).

The Schiff-base intermediate with DXP role is filled by K97. 1-deoxy-D-xylulose 5-phosphate contacts are provided by residues G158, 185–186 (AG), and 207–208 (NT). Positions 243 to 262 (DKAQASTPTVGQPFWHSAEY) are disordered.

The protein belongs to the ThiG family. Homotetramer. Forms heterodimers with either ThiH or ThiS.

Its subcellular location is the cytoplasm. It catalyses the reaction [ThiS sulfur-carrier protein]-C-terminal-Gly-aminoethanethioate + 2-iminoacetate + 1-deoxy-D-xylulose 5-phosphate = [ThiS sulfur-carrier protein]-C-terminal Gly-Gly + 2-[(2R,5Z)-2-carboxy-4-methylthiazol-5(2H)-ylidene]ethyl phosphate + 2 H2O + H(+). The protein operates within cofactor biosynthesis; thiamine diphosphate biosynthesis. Functionally, catalyzes the rearrangement of 1-deoxy-D-xylulose 5-phosphate (DXP) to produce the thiazole phosphate moiety of thiamine. Sulfur is provided by the thiocarboxylate moiety of the carrier protein ThiS. In vitro, sulfur can be provided by H(2)S. The chain is Thiazole synthase from Neisseria meningitidis serogroup C (strain 053442).